Reading from the N-terminus, the 180-residue chain is Adenine phosphoribosyltransferase (180 aa).

Position 2 is an N-acetylalanine (Ala-2). Residues Ser-4, Ser-15, and Ser-30 each carry the phosphoserine modification. Tyr-60 bears the Phosphotyrosine mark. Ser-66 carries the phosphoserine modification. Lys-114 bears the N6-acetyllysine mark. At Thr-135 the chain carries Phosphothreonine.

Belongs to the purine/pyrimidine phosphoribosyltransferase family. In terms of assembly, homodimer.

It localises to the cytoplasm. The catalysed reaction is AMP + diphosphate = 5-phospho-alpha-D-ribose 1-diphosphate + adenine. Its pathway is purine metabolism; AMP biosynthesis via salvage pathway; AMP from adenine: step 1/1. In terms of biological role, catalyzes a salvage reaction resulting in the formation of AMP, that is energically less costly than de novo synthesis. The polypeptide is Adenine phosphoribosyltransferase (Cricetulus griseus (Chinese hamster)).